A 140-amino-acid polypeptide reads, in one-letter code: MSRTIMAFDFGTKSIGSAIGQEITGTASPLKAFKANDGIPNWDEIEKQIKEWQPNLLVVGLPTDLHGKALETITPRAKKFAQRLQGRFALPVELHDERLSTTEARSELFSMGGYKALSKGNVDCQSAVIILESWFEAQWG.

The protein belongs to the YqgF nuclease family.

The protein resides in the cytoplasm. In terms of biological role, could be a nuclease involved in processing of the 5'-end of pre-16S rRNA. This chain is Putative pre-16S rRNA nuclease, found in Vibrio vulnificus (strain YJ016).